The primary structure comprises 383 residues: MTASSPSLSPTLELACELIRRPSVTPLDADCQALMMRRLEAAGFALEPMRIEEVDNFWARRGGDGPVLCFAGHTDVVPTGPLQAWQHQPFDALIDDQGMLCGRGAADMKGSLASMIVAVERFVADHPKHKGAIAFLITSDEEGPAHHGTKAVVERLAARGERLDWCIVGEPSSTSLVGDVVKNGRRGSLGAKLTIRGVQGHVAYPHLAKNPIHLAAPALAELAAEHWDDGNAFFPPTSFQVSNLNSGTGATNVIPGELTALFNFRFSTESTVEGLQKRVEAILDKHGLDWHVEWALSGLPFLTEPGELLDAVAASIRAVTGREARPSTSGGTSDGRFIATMGTQVVELGPVNATIHQVNERVLASDLELLTEIYYQTLVRLLA.

A Zn(2+)-binding site is contributed by His73. Asp75 is a catalytic residue. Position 107 (Asp107) interacts with Zn(2+). Glu141 (proton acceptor) is an active-site residue. Zn(2+) contacts are provided by Glu142, Glu170, and His356.

Belongs to the peptidase M20A family. DapE subfamily. In terms of assembly, homodimer. It depends on Zn(2+) as a cofactor. The cofactor is Co(2+).

The enzyme catalyses N-succinyl-(2S,6S)-2,6-diaminopimelate + H2O = (2S,6S)-2,6-diaminopimelate + succinate. Its pathway is amino-acid biosynthesis; L-lysine biosynthesis via DAP pathway; LL-2,6-diaminopimelate from (S)-tetrahydrodipicolinate (succinylase route): step 3/3. Its function is as follows. Catalyzes the hydrolysis of N-succinyl-L,L-diaminopimelic acid (SDAP), forming succinate and LL-2,6-diaminopimelate (DAP), an intermediate involved in the bacterial biosynthesis of lysine and meso-diaminopimelic acid, an essential component of bacterial cell walls. The protein is Succinyl-diaminopimelate desuccinylase of Pseudomonas aeruginosa (strain UCBPP-PA14).